A 339-amino-acid polypeptide reads, in one-letter code: MNQTLMEIKERALSQINASDTLDALNEIRVNFLGKKGELTSVLKSMKDVAPEDRPKVGQLVNEARESLEEALESKKEAFGKVLREAKMKAETIDVTLPAKKPMLGHRHPNTIALEEAERIFVGMGYEVVEGPEIEYDYYNFEALNIPANHPAKDEQDTFYVTSNILLRTQTSPVQVHVMEQGKLPIRMIAPGRVFRSDEVDATHSPSFHQIEGLVIDKNITFADLKGTLAEFAKQLFGEETKVKFRPHHFPFTEPSAEVDVSCFKCGGKGCRFCKGSGWIEILGCGMVHPRVLEMSGIDPEEYTGFAFGVGLERIALLKYEIDDMRLLYENDMRFLKQF.

Glu-254 is a Mg(2+) binding site.

It belongs to the class-II aminoacyl-tRNA synthetase family. Phe-tRNA synthetase alpha subunit type 1 subfamily. Tetramer of two alpha and two beta subunits. Requires Mg(2+) as cofactor.

It localises to the cytoplasm. It carries out the reaction tRNA(Phe) + L-phenylalanine + ATP = L-phenylalanyl-tRNA(Phe) + AMP + diphosphate + H(+). This chain is Phenylalanine--tRNA ligase alpha subunit, found in Lachnoclostridium phytofermentans (strain ATCC 700394 / DSM 18823 / ISDg) (Clostridium phytofermentans).